The sequence spans 211 residues: 2,3-bisphosphoglycerate-dependent phosphoglycerate mutase (211 aa).

Substrate contacts are provided by residues 9–16, 22–23, arginine 61, 88–91, lysine 99, 115–116, and 159–160; these read RHGQSDWN, TG, ERDY, RR, and GN. Histidine 10 (tele-phosphohistidine intermediate) is an active-site residue. Catalysis depends on glutamate 88, which acts as the Proton donor/acceptor.

This sequence belongs to the phosphoglycerate mutase family. BPG-dependent PGAM subfamily. Homodimer.

The catalysed reaction is (2R)-2-phosphoglycerate = (2R)-3-phosphoglycerate. It participates in carbohydrate degradation; glycolysis; pyruvate from D-glyceraldehyde 3-phosphate: step 3/5. Its function is as follows. Catalyzes the interconversion of 2-phosphoglycerate and 3-phosphoglycerate. This Rhizobium etli (strain CIAT 652) protein is 2,3-bisphosphoglycerate-dependent phosphoglycerate mutase.